The sequence spans 259 residues: Deoxyribose-phosphate aldolase (259 aa).

Aspartate 102 (proton donor/acceptor) is an active-site residue. Lysine 167 functions as the Schiff-base intermediate with acetaldehyde in the catalytic mechanism. Residue lysine 201 is the Proton donor/acceptor of the active site.

It belongs to the DeoC/FbaB aldolase family. DeoC type 2 subfamily.

It is found in the cytoplasm. It carries out the reaction 2-deoxy-D-ribose 5-phosphate = D-glyceraldehyde 3-phosphate + acetaldehyde. It functions in the pathway carbohydrate degradation; 2-deoxy-D-ribose 1-phosphate degradation; D-glyceraldehyde 3-phosphate and acetaldehyde from 2-deoxy-alpha-D-ribose 1-phosphate: step 2/2. Catalyzes a reversible aldol reaction between acetaldehyde and D-glyceraldehyde 3-phosphate to generate 2-deoxy-D-ribose 5-phosphate. This is Deoxyribose-phosphate aldolase from Proteus mirabilis (strain HI4320).